A 429-amino-acid chain; its full sequence is 3-phosphoshikimate 1-carboxyvinyltransferase (429 aa).

Residues K23, S24, and R28 each contribute to the 3-phosphoshikimate site. K23 contacts phosphoenolpyruvate. The phosphoenolpyruvate site is built by G95 and R123. 4 residues coordinate 3-phosphoshikimate: S168, Q170, D316, and K343. A phosphoenolpyruvate-binding site is contributed by Q170. Catalysis depends on D316, which acts as the Proton acceptor. 2 residues coordinate phosphoenolpyruvate: R347 and R389.

The protein belongs to the EPSP synthase family. Monomer.

It localises to the cytoplasm. It catalyses the reaction 3-phosphoshikimate + phosphoenolpyruvate = 5-O-(1-carboxyvinyl)-3-phosphoshikimate + phosphate. It functions in the pathway metabolic intermediate biosynthesis; chorismate biosynthesis; chorismate from D-erythrose 4-phosphate and phosphoenolpyruvate: step 6/7. Catalyzes the transfer of the enolpyruvyl moiety of phosphoenolpyruvate (PEP) to the 5-hydroxyl of shikimate-3-phosphate (S3P) to produce enolpyruvyl shikimate-3-phosphate and inorganic phosphate. This is 3-phosphoshikimate 1-carboxyvinyltransferase from Bacillus thuringiensis subsp. konkukian (strain 97-27).